A 181-amino-acid polypeptide reads, in one-letter code: Ferredoxin C 2, chloroplastic (181 aa).

A chloroplast-targeting transit peptide spans 1-44; the sequence is MALILPCTFCTSLQKKNFPINRRYITNFRRGATTATCEFRIPVE. The region spanning 59–151 is the 2Fe-2S ferredoxin-type domain; that stretch reads HKVTVHDRQR…DLEVETQDED (93 aa). 4 residues coordinate [2Fe-2S] cluster: C97, C102, C105, and C135.

It belongs to the 2Fe2S plant-type ferredoxin family. The cofactor is [2Fe-2S] cluster.

It is found in the plastid. Its subcellular location is the chloroplast. In terms of biological role, ferredoxins are iron-sulfur proteins that transfer electrons in a wide variety of metabolic reactions. Mediates alternative electron partitioning in conditions of acceptor limitation at photosystem I. This is Ferredoxin C 2, chloroplastic from Arabidopsis thaliana (Mouse-ear cress).